Here is a 348-residue protein sequence, read N- to C-terminus: Phenylalanine--tRNA ligase alpha subunit (348 aa).

Glu-259 is a binding site for Mg(2+).

Belongs to the class-II aminoacyl-tRNA synthetase family. Phe-tRNA synthetase alpha subunit type 1 subfamily. Tetramer of two alpha and two beta subunits. The cofactor is Mg(2+).

The protein localises to the cytoplasm. The enzyme catalyses tRNA(Phe) + L-phenylalanine + ATP = L-phenylalanyl-tRNA(Phe) + AMP + diphosphate + H(+). In Ligilactobacillus salivarius (strain UCC118) (Lactobacillus salivarius), this protein is Phenylalanine--tRNA ligase alpha subunit.